The primary structure comprises 342 residues: tRNA dimethylallyltransferase (342 aa).

Polar residues predominate over residues 1-13 (MNDTTAKTLNCSP). The segment at 1-21 (MNDTTAKTLNCSPASRDGFPE) is disordered. 40 to 47 (GPTGVGKT) serves as a coordination point for ATP. 42–47 (TGVGKT) provides a ligand contact to substrate. Interaction with substrate tRNA stretches follow at residues 65 to 68 (DSMQ) and 189 to 193 (QRILR).

The protein belongs to the IPP transferase family. Monomer. The cofactor is Mg(2+).

The catalysed reaction is adenosine(37) in tRNA + dimethylallyl diphosphate = N(6)-dimethylallyladenosine(37) in tRNA + diphosphate. Its function is as follows. Catalyzes the transfer of a dimethylallyl group onto the adenine at position 37 in tRNAs that read codons beginning with uridine, leading to the formation of N6-(dimethylallyl)adenosine (i(6)A). In Syntrophobacter fumaroxidans (strain DSM 10017 / MPOB), this protein is tRNA dimethylallyltransferase.